Reading from the N-terminus, the 178-residue chain is uncharacterized protein (178 aa).

Positions 1-20 (MKKLLVASLALLILTPVALA) are cleaved as a signal peptide.

This is an uncharacterized protein from Archaeoglobus fulgidus (strain ATCC 49558 / DSM 4304 / JCM 9628 / NBRC 100126 / VC-16).